Consider the following 352-residue polypeptide: Pre-rRNA-processing protein ipi1 (352 aa).

This sequence belongs to the IPI1/TEX10 family. In terms of assembly, component of the RIX1 complex, composed of rrm-9/ipi1, rix1/ipi2 and ipi3 in a 1:2:2 stoichiometry. The complex interacts (via rix1) with mdn1 (via its hexameric AAA ATPase ring) and the pre-60S ribosome particles.

The protein localises to the nucleus. Component of the RIX1 complex required for processing of ITS2 sequences from 35S pre-rRNA. The sequence is that of Pre-rRNA-processing protein ipi1 (rrm-9) from Neurospora crassa (strain ATCC 24698 / 74-OR23-1A / CBS 708.71 / DSM 1257 / FGSC 987).